Reading from the N-terminus, the 294-residue chain is tRNA dimethylallyltransferase (294 aa).

Residue 9–16 (GATATGKS) coordinates ATP. 11–16 (TATGKS) provides a ligand contact to substrate. Positions 34–37 (DSRQ) are interaction with substrate tRNA.

Belongs to the IPP transferase family. In terms of assembly, monomer. Mg(2+) is required as a cofactor.

The enzyme catalyses adenosine(37) in tRNA + dimethylallyl diphosphate = N(6)-dimethylallyladenosine(37) in tRNA + diphosphate. In terms of biological role, catalyzes the transfer of a dimethylallyl group onto the adenine at position 37 in tRNAs that read codons beginning with uridine, leading to the formation of N6-(dimethylallyl)adenosine (i(6)A). The sequence is that of tRNA dimethylallyltransferase from Trichormus variabilis (strain ATCC 29413 / PCC 7937) (Anabaena variabilis).